We begin with the raw amino-acid sequence, 353 residues long: MEGYLVLEDGTSFSGELDGHENCTGEAVFFTGMTGYQEVLTDPSYKGQIIVFTYPLIGNYGINEKDFESKKPQVKAAVVYEACDHFSHYEAVYSLKEYLQKWNIPLLTHVDTRAVVKKIRANGTMGATVTASKEGAEIALQPENVAEQASAQEISTFGDGNKHIALIDFGYKKSIASSLVKRGCKVTVVPYQQMEAVYNIKPDGIVLSNGPGDPKAIQPYLGKIKSIISRFPTLGICLGHQLIALAFGGNTFKLPFGHRGANHPVIDRKTKRVFMTSQNHSYVVDEQSINEEELTIRFHHVNDTSVEGLAHKKLPVMSVQFHPEAHPGPAESEWIFDDYLKNVIPARREIAHA.

The tract at residues 1–162 is CPSase; it reads MEGYLVLEDG…EISTFGDGNK (162 aa). 3 residues coordinate L-glutamine: serine 44, glycine 210, and glycine 212. The Glutamine amidotransferase type-1 domain maps to 163–349; that stretch reads HIALIDFGYK…LKNVIPARRE (187 aa). The Nucleophile role is filled by cysteine 237. L-glutamine-binding residues include leucine 238, glutamine 241, asparagine 279, and tyrosine 282. Catalysis depends on residues histidine 322 and glutamate 324.

This sequence belongs to the CarA family. Composed of two chains; the small (or glutamine) chain promotes the hydrolysis of glutamine to ammonia, which is used by the large (or ammonia) chain to synthesize carbamoyl phosphate. Tetramer of heterodimers (alpha,beta)4.

It catalyses the reaction hydrogencarbonate + L-glutamine + 2 ATP + H2O = carbamoyl phosphate + L-glutamate + 2 ADP + phosphate + 2 H(+). It carries out the reaction L-glutamine + H2O = L-glutamate + NH4(+). It participates in amino-acid biosynthesis; L-arginine biosynthesis; carbamoyl phosphate from bicarbonate: step 1/1. Its function is as follows. Small subunit of the glutamine-dependent carbamoyl phosphate synthetase (CPSase). CPSase catalyzes the formation of carbamoyl phosphate from the ammonia moiety of glutamine, carbonate, and phosphate donated by ATP, constituting the first step of the biosynthetic pathway leading to arginine and/or urea. The small subunit (glutamine amidotransferase) binds and cleaves glutamine to supply the large subunit with the substrate ammonia. This Bacillus subtilis (strain 168) protein is Carbamoyl phosphate synthase arginine-specific small chain.